The following is a 417-amino-acid chain: Serine hydroxymethyltransferase (417 aa).

(6S)-5,6,7,8-tetrahydrofolate contacts are provided by residues Leu121 and 125 to 127 (GHL). Lys229 carries the post-translational modification N6-(pyridoxal phosphate)lysine. Residue 355 to 357 (SPF) participates in (6S)-5,6,7,8-tetrahydrofolate binding.

The protein belongs to the SHMT family. In terms of assembly, homodimer. Requires pyridoxal 5'-phosphate as cofactor.

Its subcellular location is the cytoplasm. It carries out the reaction (6R)-5,10-methylene-5,6,7,8-tetrahydrofolate + glycine + H2O = (6S)-5,6,7,8-tetrahydrofolate + L-serine. The protein operates within one-carbon metabolism; tetrahydrofolate interconversion. Its pathway is amino-acid biosynthesis; glycine biosynthesis; glycine from L-serine: step 1/1. In terms of biological role, catalyzes the reversible interconversion of serine and glycine with tetrahydrofolate (THF) serving as the one-carbon carrier. This reaction serves as the major source of one-carbon groups required for the biosynthesis of purines, thymidylate, methionine, and other important biomolecules. Also exhibits THF-independent aldolase activity toward beta-hydroxyamino acids, producing glycine and aldehydes, via a retro-aldol mechanism. The polypeptide is Serine hydroxymethyltransferase (Salmonella arizonae (strain ATCC BAA-731 / CDC346-86 / RSK2980)).